The primary structure comprises 362 residues: Oryzain gamma chain (362 aa).

The signal sequence occupies residues 1-24 (MAHRRIILLLAAAAVAATSAVAAA). Positions 25–144 (SSGFDDSNPI…GNHRMRDAAA (120 aa)) are cleaved as a propeptide — activation peptide. Asn-128 is a glycosylation site (N-linked (GlcNAc...) asparagine). 2 cysteine pairs are disulfide-bonded: Cys-166-Cys-209 and Cys-200-Cys-242. Cys-169 is a catalytic residue. An N-linked (GlcNAc...) asparagine glycan is attached at Asn-258. Cys-300 and Cys-350 are oxidised to a cystine. Residues His-309 and Asn-329 contribute to the active site.

Belongs to the peptidase C1 family. In terms of tissue distribution, expressed only in seeds.

In Oryza sativa subsp. japonica (Rice), this protein is Oryzain gamma chain.